Reading from the N-terminus, the 909-residue chain is E3 ubiquitin-protein ligase HACE1 (909 aa).

Residues 1–21 form an N-terminal helix important for homodimerization region; sequence MERAMEQLNRLTRSLRRARTV. ANK repeat units follow at residues 23-55, 64-93, 97-126, 130-159, 163-192, 196-226, and 228-253; these read LPED…NSKF, VKRS…NPNY, SGCT…DVNI, EGLT…DVDV, MGQT…DINR, SGAT…YLPD, and NGVT…QYHP. The interval 398–433 is disordered; that stretch reads QDQDAASIPPFEPPGPGSYENLSTGTRESKPDALAG. An HECT domain is found at 574–909; sequence NCAKLKQGIA…HCGSYGYTMA (336 aa). The Glycyl thioester intermediate role is filled by cysteine 876.

Homodimer. The homodimer is autoinhibited and stabilized by its N-terminal helix. Interacts with RAB1 (RAB1A, RAB1B or RAB1C), RAB4 (RAB4A or RAB4B) and RAB11 (RAB11A or RAB11B); in a GTP-dependent manner. Interacts with the 26S proteasomal complex through the 20S core proteasomal subunit. Interacts with RARB. In terms of processing, autoubiquitinated. As to expression, expressed in multiple tissues including heart, brain and kidney.

Its subcellular location is the golgi apparatus. It localises to the golgi stack membrane. It is found in the cytoplasm. The protein resides in the endoplasmic reticulum. It catalyses the reaction S-ubiquitinyl-[E2 ubiquitin-conjugating enzyme]-L-cysteine + [acceptor protein]-L-lysine = [E2 ubiquitin-conjugating enzyme]-L-cysteine + N(6)-ubiquitinyl-[acceptor protein]-L-lysine.. It functions in the pathway protein modification; protein ubiquitination. Its activity is regulated as follows. Sterically autoinhibited in its dimeric state. Functionally, E3 ubiquitin-protein ligase involved in Golgi membrane fusion and regulation of small GTPases. Acts as a regulator of Golgi membrane dynamics during the cell cycle: recruited to Golgi membrane by Rab proteins and regulates postmitotic Golgi membrane fusion. Acts by mediating ubiquitination during mitotic Golgi disassembly, ubiquitination serving as a signal for Golgi reassembly later, after cell division. Specifically binds GTP-bound RAC1, mediating ubiquitination and subsequent degradation of active RAC1, thereby playing a role in host defense against pathogens. May also act as a transcription regulator via its interaction with RARB. The polypeptide is E3 ubiquitin-protein ligase HACE1 (HACE1) (Homo sapiens (Human)).